The following is a 192-amino-acid chain: Xanthine phosphoribosyltransferase (192 aa).

Leu-20 and Asn-27 together coordinate xanthine. Residue 128–132 (ANGDA) participates in 5-phospho-alpha-D-ribose 1-diphosphate binding. Lys-156 contributes to the xanthine binding site.

It belongs to the purine/pyrimidine phosphoribosyltransferase family. Xpt subfamily. In terms of assembly, homodimer.

It localises to the cytoplasm. It catalyses the reaction XMP + diphosphate = xanthine + 5-phospho-alpha-D-ribose 1-diphosphate. It functions in the pathway purine metabolism; XMP biosynthesis via salvage pathway; XMP from xanthine: step 1/1. Its function is as follows. Converts the preformed base xanthine, a product of nucleic acid breakdown, to xanthosine 5'-monophosphate (XMP), so it can be reused for RNA or DNA synthesis. The polypeptide is Xanthine phosphoribosyltransferase (Staphylococcus aureus (strain JH1)).